Consider the following 528-residue polypeptide: Tyrosine--tRNA ligase, cytoplasmic (528 aa).

Met-1 is subject to N-acetylmethionine. An N-acetylglycine; in Tyrosine--tRNA ligase, cytoplasmic, N-terminally processed modification is found at Gly-2. Residue Tyr-39 participates in L-tyrosine binding. Tyr-39 contributes to the trans-resveratrol binding site. The 'HIGH' region motif lies at Thr-44–Tyr-52. Residues Tyr-166, Gln-170, Asp-173, and Gln-188 each coordinate L-tyrosine. Positions 170 and 173 each coordinate trans-resveratrol. N6-acetyllysine is present on Lys-197. At Ser-205 the chain carries Phosphoserine. N6-acetyllysine is present on Lys-206. Residues Lys-222 to Ser-226 carry the 'KMSKS' region motif. A Nuclear localization signal motif is present at residues Lys-242–Lys-247. Residues Ala-339–Ile-363 form a disordered region. Positions Ile-364 to Phe-468 constitute a tRNA-binding domain. Position 386 is a phosphoserine (Ser-386). Lys-474, Lys-482, and Lys-490 each carry N6-acetyllysine.

It belongs to the class-I aminoacyl-tRNA synthetase family. As to quaternary structure, homodimer. Interacts (when binding to resveratrol) with PARP1; interaction stimulates the poly-ADP-ribosyltransferase activity of PARP1.

Its subcellular location is the cytoplasm. The protein resides in the nucleus. It catalyses the reaction tRNA(Tyr) + L-tyrosine + ATP = L-tyrosyl-tRNA(Tyr) + AMP + diphosphate + H(+). With respect to regulation, resveratrol strongly inhibits the tyrosine--tRNA ligase activity. Its function is as follows. Tyrosine--tRNA ligase that catalyzes the attachment of tyrosine to tRNA(Tyr) in a two-step reaction: tyrosine is first activated by ATP to form Tyr-AMP and then transferred to the acceptor end of tRNA(Tyr). Also acts as a positive regulator of poly-ADP-ribosylation in the nucleus, independently of its tyrosine--tRNA ligase activity. Activity is switched upon resveratrol-binding: resveratrol strongly inhibits the tyrosine--tRNA ligase activity and promotes relocalization to the nucleus, where YARS1 specifically stimulates the poly-ADP-ribosyltransferase activity of PARP1. This chain is Tyrosine--tRNA ligase, cytoplasmic (Yars1), found in Rattus norvegicus (Rat).